The primary structure comprises 208 residues: ATP-dependent Clp protease proteolytic subunit (208 aa).

Ser105 serves as the catalytic Nucleophile. The active site involves His130.

This sequence belongs to the peptidase S14 family. Fourteen ClpP subunits assemble into 2 heptameric rings which stack back to back to give a disk-like structure with a central cavity, resembling the structure of eukaryotic proteasomes.

It is found in the cytoplasm. It catalyses the reaction Hydrolysis of proteins to small peptides in the presence of ATP and magnesium. alpha-casein is the usual test substrate. In the absence of ATP, only oligopeptides shorter than five residues are hydrolyzed (such as succinyl-Leu-Tyr-|-NHMec, and Leu-Tyr-Leu-|-Tyr-Trp, in which cleavage of the -Tyr-|-Leu- and -Tyr-|-Trp bonds also occurs).. Functionally, cleaves peptides in various proteins in a process that requires ATP hydrolysis. Has a chymotrypsin-like activity. Plays a major role in the degradation of misfolded proteins. The sequence is that of ATP-dependent Clp protease proteolytic subunit from Xylella fastidiosa (strain M23).